The chain runs to 116 residues: Large ribosomal subunit protein uL18 (116 aa).

This sequence belongs to the universal ribosomal protein uL18 family. In terms of assembly, part of the 50S ribosomal subunit; part of the 5S rRNA/L5/L18/L25 subcomplex. Contacts the 5S and 23S rRNAs.

Functionally, this is one of the proteins that bind and probably mediate the attachment of the 5S RNA into the large ribosomal subunit, where it forms part of the central protuberance. The chain is Large ribosomal subunit protein uL18 from Mycoplasma mycoides subsp. mycoides SC (strain CCUG 32753 / NCTC 10114 / PG1).